The primary structure comprises 142 residues: Small heat shock protein IbpB (142 aa).

A sHSP domain is found at Thr-26–Arg-137.

Belongs to the small heat shock protein (HSP20) family. Homodimer. Forms homomultimers of about 100-150 subunits at optimal growth temperatures. Conformation changes to oligomers at high temperatures or high ionic concentrations. The decrease in size of the multimers is accompanied by an increase in chaperone activity.

Its subcellular location is the cytoplasm. Its function is as follows. Associates with aggregated proteins, together with IbpA, to stabilize and protect them from irreversible denaturation and extensive proteolysis during heat shock and oxidative stress. Aggregated proteins bound to the IbpAB complex are more efficiently refolded and reactivated by the ATP-dependent chaperone systems ClpB and DnaK/DnaJ/GrpE. Its activity is ATP-independent. In Citrobacter koseri (strain ATCC BAA-895 / CDC 4225-83 / SGSC4696), this protein is Small heat shock protein IbpB.